Reading from the N-terminus, the 214-residue chain is Ras-like protein rasZ (214 aa).

16 to 23 (GDGGVGKT) is a binding site for GTP. The short motif at 38–46 (YDPTIEDSY) is the Effector region element. Residues 63-67 (DTAGQ) and 122-125 (NKSD) each bind GTP. Cys-211 carries the cysteine methyl ester modification. Cys-211 carries the S-geranylgeranyl cysteine lipid modification. Residues 212–214 (KMM) constitute a propeptide, removed in mature form.

This sequence belongs to the small GTPase superfamily. Ras family.

It localises to the cell membrane. It catalyses the reaction GTP + H2O = GDP + phosphate + H(+). In terms of biological role, ras proteins bind GDP/GTP and possess intrinsic GTPase activity. The polypeptide is Ras-like protein rasZ (rasZ) (Dictyostelium discoideum (Social amoeba)).